A 406-amino-acid polypeptide reads, in one-letter code: Enoyl-[acyl-carrier-protein] reductase [NADH] (406 aa).

Residues 48-53 (GASTGF), 74-75 (FE), 111-112 (DA), and 140-141 (IA) contribute to the NAD(+) site. A substrate-binding site is contributed by Tyr226. Residue Tyr236 is the Proton donor of the active site. Residues Lys245 and 275-277 (LVT) contribute to the NAD(+) site.

Belongs to the TER reductase family. Monomer.

It carries out the reaction a 2,3-saturated acyl-[ACP] + NAD(+) = a (2E)-enoyl-[ACP] + NADH + H(+). Its pathway is lipid metabolism; fatty acid biosynthesis. Its function is as follows. Involved in the final reduction of the elongation cycle of fatty acid synthesis (FAS II). Catalyzes the reduction of a carbon-carbon double bond in an enoyl moiety that is covalently linked to an acyl carrier protein (ACP). This chain is Enoyl-[acyl-carrier-protein] reductase [NADH], found in Coxiella burnetii (strain Dugway 5J108-111).